Reading from the N-terminus, the 572-residue chain is Protein 5NUC (572 aa).

An N-terminal signal peptide occupies residues 1 to 25 (MLFFLNFFVLVFSIELALLTASAAA). 2 residues coordinate Zn(2+): Asp-39 and His-41. An intrachain disulfide couples Cys-54 to Cys-64. N-linked (GlcNAc...) asparagine glycosylation is present at Asn-82. Residues Asp-93, Asn-125, His-227, and His-250 each contribute to the Zn(2+) site. A disulfide bridge links Cys-360 with Cys-365. Substrate-binding residues include Arg-361, Gln-399, Arg-404, and Phe-427. N-linked (GlcNAc...) asparagine glycosylation is found at Asn-454 and Asn-490. The cysteines at positions 488 and 491 are disulfide-linked. 512-518 (FMKDGGD) provides a ligand contact to substrate.

This sequence belongs to the 5'-nucleotidase family. The cofactor is Zn(2+).

The enzyme catalyses UDP-sugar + H2O = UMP + alpha-D-aldose 1-phosphate.. It catalyses the reaction a ribonucleoside 5'-phosphate + H2O = a ribonucleoside + phosphate. In terms of biological role, degradation of external UDP-glucose to uridine monophosphate and glucose-1-phosphate, which can then be used by the cell. This is Protein 5NUC (5NUC) from Lutzomyia longipalpis (Sand fly).